Consider the following 61-residue polypeptide: Alpha-conotoxin PnIB (61 aa).

The N-terminal stretch at 1–21 (MGMRMMFTVFLLVVLATTVVS) is a signal peptide. Positions 22 to 44 (FTSDRASDDGNAAASDLIALTIK) are excised as a propeptide. Cystine bridges form between C46–C52 and C47–C60. The interval 48 to 50 (SLP) is ser-Xaa-Pro motif, crucial for potent interaction with nAChR. At Y59 the chain carries Sulfotyrosine. C60 is subject to Cysteine amide.

The protein belongs to the conotoxin A superfamily. In terms of tissue distribution, expressed by the venom duct.

The protein localises to the secreted. Its function is as follows. Alpha-conotoxins act on postsynaptic membranes, they bind to the nicotinic acetylcholine receptors (nAChR) and thus inhibit them. This toxin blocks mammalian nAChRs (alpha-7/CHRNA7 &gt; alpha-3-beta-2/CHRNA3-CHRNB2). The protein is Alpha-conotoxin PnIB of Conus pennaceus (Feathered cone).